The chain runs to 78 residues: Structural DNA-binding protein p10 (78 aa).

Residues 1 to 25 show a composition bias toward low complexity; sequence MPTKAGTKSTANKKTTKGSSKSGSA. A disordered region spans residues 1–41; it reads MPTKAGTKSTANKKTTKGSSKSGSARGHTGKTHAPPSMHSG.

The protein belongs to the asfivirus P10 family.

The protein resides in the virion. May play a role in genome packaging through direct interaction with viral DNA. Binds to ssDNA and dsDNA with the same apparent affinity in vitro. The protein is Structural DNA-binding protein p10 of African swine fever virus (isolate Warthog/Namibia/Wart80/1980) (ASFV).